Here is a 218-residue protein sequence, read N- to C-terminus: MDTNFWLERWQLGHTGFHQQEVLPLLQKHWHALDLPKEARVLVPLCGKTLDMHWLAAQGHRVLGVELSPLAVTQFFDEAGLQPQRHSSAAGEHFIAGPIEIICGDAFALDASALADCTAVYDRAALVALPAELRQHYLQTVYAPLPTHCHGLLITLEYPQAEKAGPPFSVDATHVHALFDSAWQVDQLEHRDILDQEPRFRDEGVTGLSTAVYRLQGR.

Positions 10, 45, 66, and 123 each coordinate S-adenosyl-L-methionine.

It belongs to the class I-like SAM-binding methyltransferase superfamily. TPMT family.

Its subcellular location is the cytoplasm. It carries out the reaction S-adenosyl-L-methionine + a thiopurine = S-adenosyl-L-homocysteine + a thiopurine S-methylether.. In Xanthomonas euvesicatoria pv. vesicatoria (strain 85-10) (Xanthomonas campestris pv. vesicatoria), this protein is Thiopurine S-methyltransferase.